Reading from the N-terminus, the 136-residue chain is Replication enhancer (136 aa).

Belongs to the geminiviridae replication enhancer protein family. Homooligomer. Interacts with the replication-associated protein (REP). Interacts with host proliferating cell nuclear antigen (PCNA). Interacts with host retinoblastoma-related protein 1 (RBR1), and may thereby deregulate the host cell cycle. Oligomerization and interaction with PCNA are necessary for optimal replication enhancement.

Functionally, increases viral DNA accumulation. Enhances infectivity and symptom expression. This Beet curly top virus (strain California/Logan) (BCTV) protein is Replication enhancer.